The sequence spans 329 residues: uncharacterized protein (329 aa).

The next 10 helical transmembrane spans lie at 9 to 29, 53 to 73, 105 to 125, 126 to 146, 154 to 174, 179 to 199, 210 to 230, 240 to 260, 273 to 293, and 296 to 316; these read LMGL…NVIV, SHSF…MALI, FLMF…PTGI, AITL…RLFN, WLVI…AYGG, LVLG…YTVF, VPFT…CLII, WLAI…GHVL, AAII…LAIQ, and LTNI…LLNY. EamA domains are found at residues 103–169 and 191–316; these read CGFL…LTIP and IVYA…LLNY.

The protein belongs to the EamA transporter family.

The protein resides in the cell membrane. This is an uncharacterized protein from Synechocystis sp. (strain ATCC 27184 / PCC 6803 / Kazusa).